The primary structure comprises 118 residues: Large ribosomal subunit protein uL18 (118 aa).

This sequence belongs to the universal ribosomal protein uL18 family. In terms of assembly, part of the 50S ribosomal subunit; part of the 5S rRNA/L5/L18/L25 subcomplex. Contacts the 5S and 23S rRNAs.

This is one of the proteins that bind and probably mediate the attachment of the 5S RNA into the large ribosomal subunit, where it forms part of the central protuberance. The sequence is that of Large ribosomal subunit protein uL18 from Nitrosospira multiformis (strain ATCC 25196 / NCIMB 11849 / C 71).